A 252-amino-acid polypeptide reads, in one-letter code: 3-deoxy-manno-octulosonate cytidylyltransferase (252 aa).

This sequence belongs to the KdsB family.

It localises to the cytoplasm. The enzyme catalyses 3-deoxy-alpha-D-manno-oct-2-ulosonate + CTP = CMP-3-deoxy-beta-D-manno-octulosonate + diphosphate. The protein operates within nucleotide-sugar biosynthesis; CMP-3-deoxy-D-manno-octulosonate biosynthesis; CMP-3-deoxy-D-manno-octulosonate from 3-deoxy-D-manno-octulosonate and CTP: step 1/1. It functions in the pathway bacterial outer membrane biogenesis; lipopolysaccharide biosynthesis. Its function is as follows. Activates KDO (a required 8-carbon sugar) for incorporation into bacterial lipopolysaccharide in Gram-negative bacteria. This chain is 3-deoxy-manno-octulosonate cytidylyltransferase, found in Trichlorobacter lovleyi (strain ATCC BAA-1151 / DSM 17278 / SZ) (Geobacter lovleyi).